The primary structure comprises 77 residues: Apelin (77 aa).

The first 22 residues, 1-22, serve as a signal peptide directing secretion; it reads MNLRLCVQALLLLWLSLTAVCG. A propeptide spanning residues 23–41 is cleaved from the precursor; the sequence is GSLMPLPDGNGLEDGNVRH. The interval 43–77 is disordered; it reads VQPRGSRNGPGPWQGGRRKFRRQRPRLSHKGPMPF. Residues 58 to 71 show a composition bias toward basic residues; it reads GRRKFRRQRPRLSH.

It belongs to the apelin family. Several active peptides may be produced by proteolytic processing of the peptide precursor. Expressed in the brain with highest levels in the frontal cortex, thalamus, hypothalamus and midbrain. Secreted by the mammary gland into the colostrum and the milk.

The protein localises to the secreted. It localises to the extracellular space. Its function is as follows. Peptide hormone that functions as endogenous ligand for the G-protein-coupled apelin receptor (APLNR/APJ), that plays a role in cadiovascular homeostasis. Functions as a balanced agonist activating both G(i) protein pathway and beta-arrestin pathway of APLNR. Downstream G proteins activation, apelin can inhibit cAMP production and activate key intracellular effectors such as ERKs. On the other hand, APLNR activation induces beta-arrestin recruitment to the membrane leading to desensitization and internalization of the receptor. Apelin blunts cardiac hypertrophic induction from APLNR on response to pathological stimuli, but also induces myocardial hypertrophy under normal conditions. Apelin-36 dissociates more hardly than (pyroglu)apelin-13 from APLNR. Involved in the regulation of cardiac precursor cell movements during gastrulation and heart morphogenesis. Has an inhibitory effect on cytokine production in response to T-cell receptor/CD3 cross-linking; the oral intake of apelin in the colostrum and the milk might therefore modulate immune responses in neonates. Plays a role in early coronary blood vessels formation. Mediates myocardial contractility in an ERK1/2-dependent manner. May also have a role in the central control of body fluid homeostasis by influencing vasopressin release and drinking behavior. In terms of biological role, (Microbial infection) Endogenous ligand for the apelin receptor (APLNR), an alternative coreceptor with CD4 for HIV-1 infection. Inhibits HIV-1 entry in cells coexpressing CD4 and APLNR. Apelin-36 has a greater inhibitory activity on HIV infection than other synthetic apelin derivatives. In Homo sapiens (Human), this protein is Apelin.